The sequence spans 226 residues: Apoptosis regulator OPG045 (226 aa).

The protein belongs to the orthopoxvirus OPG045 family. In terms of assembly, homodimer. Interacts with host pro-apoptotic protein BCL2L11 (via BH3 domain). Interacts with host NLRP1. Interacts with host BAK.

Its subcellular location is the host mitochondrion outer membrane. The protein localises to the host cytoplasm. Plays a role in evading host innate immune response by inhibiting host inflammasome activation. Interacts with and inhibits NLR-mediated interleukin-1 beta/IL1B production in infected cells. At the host mitochondria outer membrane, interacts with the BH3 domain of host BAK and prevents BAK from binding active BAX. In turn, host apoptosis is inhibited. The protein is Apoptosis regulator OPG045 (OPG045) of Vaccinia virus (strain Copenhagen) (VACV).